Reading from the N-terminus, the 1099-residue chain is Carbamoyl phosphate synthase large chain (1099 aa).

Positions 1 to 402 (MPKREDIKRI…ALGKALRSLE (402 aa)) are carboxyphosphate synthetic domain. ATP is bound by residues Arg129, Arg169, Gly175, Gly176, Glu208, Val210, Glu215, Gly241, Ile242, His243, Gln285, and Glu299. In terms of domain architecture, ATP-grasp 1 spans 133–328 (KETMEKAGLE…IAKVAALLAV (196 aa)). Mg(2+) contacts are provided by Gln285, Glu299, and Asn301. Mn(2+) is bound by residues Gln285, Glu299, and Asn301. The interval 403–541 (LDAAPKLDLE…STYNGVENEA (139 aa)) is oligomerization domain. The segment at 542–944 (VPSDREKIMI…AFAKAQIAAG (403 aa)) is carbamoyl phosphate synthetic domain. Residues 666 to 857 (AKLLKQIGLK…VARIAAKIMV (192 aa)) form the ATP-grasp 2 domain. Residues Arg702, Lys741, Leu743, Glu748, Gly773, Val774, His775, Ser776, Gln816, and Glu828 each coordinate ATP. Mg(2+) is bound by residues Gln816, Glu828, and Asn830. The Mn(2+) site is built by Gln816, Glu828, and Asn830. The region spanning 945–1099 (NPLPTTGAIL…VRRLTDTWKM (155 aa)) is the MGS-like domain. The allosteric domain stretch occupies residues 945–1099 (NPLPTTGAIL…VRRLTDTWKM (155 aa)).

Belongs to the CarB family. Composed of two chains; the small (or glutamine) chain promotes the hydrolysis of glutamine to ammonia, which is used by the large (or ammonia) chain to synthesize carbamoyl phosphate. Tetramer of heterodimers (alpha,beta)4. Requires Mg(2+) as cofactor. It depends on Mn(2+) as a cofactor.

The catalysed reaction is hydrogencarbonate + L-glutamine + 2 ATP + H2O = carbamoyl phosphate + L-glutamate + 2 ADP + phosphate + 2 H(+). It carries out the reaction hydrogencarbonate + NH4(+) + 2 ATP = carbamoyl phosphate + 2 ADP + phosphate + 2 H(+). It functions in the pathway amino-acid biosynthesis; L-arginine biosynthesis; carbamoyl phosphate from bicarbonate: step 1/1. The protein operates within pyrimidine metabolism; UMP biosynthesis via de novo pathway; (S)-dihydroorotate from bicarbonate: step 1/3. In terms of biological role, large subunit of the glutamine-dependent carbamoyl phosphate synthetase (CPSase). CPSase catalyzes the formation of carbamoyl phosphate from the ammonia moiety of glutamine, carbonate, and phosphate donated by ATP, constituting the first step of 2 biosynthetic pathways, one leading to arginine and/or urea and the other to pyrimidine nucleotides. The large subunit (synthetase) binds the substrates ammonia (free or transferred from glutamine from the small subunit), hydrogencarbonate and ATP and carries out an ATP-coupled ligase reaction, activating hydrogencarbonate by forming carboxy phosphate which reacts with ammonia to form carbamoyl phosphate. The polypeptide is Carbamoyl phosphate synthase large chain (Thermotoga petrophila (strain ATCC BAA-488 / DSM 13995 / JCM 10881 / RKU-1)).